The following is a 347-amino-acid chain: Globoside alpha-1,3-N-acetylgalactosaminyltransferase 1 (347 aa).

Over 1–5 (MRCRR) the chain is Cytoplasmic. Residues 6–26 (LALGLGFSLLSGIALWSLWIY) form a helical; Signal-anchor for type II membrane protein membrane-spanning segment. Residues 27 to 347 (METWLPFSYV…LDKATSWLRS (321 aa)) are Lumenal-facing. N-linked (GlcNAc...) asparagine glycosylation occurs at Asn-108. Substrate is bound by residues 116–121 (FAVGKY), 206–208 (DVD), and 228–231 (HPGY). Mn(2+) contacts are provided by Asp-206 and Asp-208. The active-site Nucleophile is the Glu-298.

This sequence belongs to the glycosyltransferase 6 family. The cofactor is Mn(2+).

The protein localises to the golgi apparatus membrane. The catalysed reaction is a globoside Gb4Cer (d18:1(4E)) + UDP-N-acetyl-alpha-D-galactosamine = a globoside Forssman (d18:1(4E)) + UDP + H(+). It carries out the reaction a globoside Gb4Cer + UDP-N-acetyl-alpha-D-galactosamine = a globoside IV3GalNAc-Gb4Cer + UDP + H(+). The protein operates within protein modification; protein glycosylation. Catalyzes the formation of Forssman glycolipid via the addition of N-acetylgalactosamine (GalNAc) in alpha-1,3-linkage to GalNAcb-1,3Gala-1,4Galb-1,4GlcCer (Gb4Cer). Forssman glycolipid (also called Forssman antigen; FG) probably serves for adherence of some pathogens such as E.coli uropathogenic strains. The polypeptide is Globoside alpha-1,3-N-acetylgalactosaminyltransferase 1 (Canis lupus familiaris (Dog)).